Reading from the N-terminus, the 198-residue chain is Recombination protein RecR (198 aa).

A C4-type zinc finger spans residues 57–72 (CSICGNLTDQDPCAIC). A Toprim domain is found at 80 to 175 (STILIVEDSR…KVTRLARGLA (96 aa)).

This sequence belongs to the RecR family.

May play a role in DNA repair. It seems to be involved in an RecBC-independent recombinational process of DNA repair. It may act with RecF and RecO. This chain is Recombination protein RecR, found in Streptococcus suis (strain 05ZYH33).